The primary structure comprises 63 residues: Lysis protein (63 aa).

The helical transmembrane segment at 21–43 (LYVWIALAIVLSDFTSIFSHWIW) threads the bilayer.

Belongs to the Leviviricetes lysis protein family.

The protein resides in the host cell inner membrane. Its subcellular location is the host cell outer membrane. In terms of biological role, induces the formation of specific membrane adhesion sites between the inner and outer membranes, apparently leading to host cell lysis. Lysis may be performed via activation of host murein hydrolases. This chain is Lysis protein, found in Escherichia coli (Bacteriophage JP34).